We begin with the raw amino-acid sequence, 444 residues long: NAD-capped RNA hydrolase NUDT12 (444 aa).

2 ANK repeats span residues 11-40 (EIISQFHYSAAEGDIAKLTAILSHSPSLLN) and 60-80 (SRQTALDIAKFWGYKHIANLL). K167 is modified (N6-succinyllysine). 2 residues coordinate Zn(2+): C266 and C269. K274 is modified (N6-succinyllysine). Zn(2+)-binding residues include C284 and C289. Substrate-binding positions include Y300, 336–338 (AGF), E352, E356, and E397. One can recognise a Nudix hydrolase domain in the interval 301–435 (PRVDPVVIMQ…SRAIAHQLIK (135 aa)). Mg(2+) is bound by residues A336, E352, E356, and E397. The Nudix box motif lies at 337 to 358 (GFIEPGETIEDAVRREVEEESG). The Microbody targeting signal motif lies at 442-444 (PNL).

It belongs to the Nudix hydrolase family. NudC subfamily. As to quaternary structure, homodimer. Homodimerization is essential for its catalytic activity and protein stability. Interacts (via ANK repeats) with BLMH. The cofactor is Mg(2+). Zn(2+) serves as cofactor.

The protein localises to the cytoplasm. It is found in the peroxisome. Its subcellular location is the cytoplasmic granule. It carries out the reaction a 5'-end NAD(+)-phospho-ribonucleoside in mRNA + H2O = a 5'-end phospho-adenosine-phospho-ribonucleoside in mRNA + beta-nicotinamide D-ribonucleotide + 2 H(+). The enzyme catalyses NAD(+) + H2O = beta-nicotinamide D-ribonucleotide + AMP + 2 H(+). It catalyses the reaction NADH + H2O = reduced beta-nicotinamide D-ribonucleotide + AMP + 2 H(+). The catalysed reaction is NADPH + H2O = reduced beta-nicotinamide D-ribonucleotide + adenosine 2',5'-bisphosphate + 2 H(+). MRNA decapping enzyme that specifically removes the nicotinamide adenine dinucleotide (NAD) cap from a subset of mRNAs by hydrolyzing the diphosphate linkage to produce nicotinamide mononucleotide (NMN) and 5' monophosphate mRNA. The NAD-cap is present at the 5'-end of some RNAs; in contrast to the canonical N7 methylguanosine (m7G) cap, the NAD cap promotes mRNA decay. Preferentially acts on NAD-capped transcripts in response to nutrient stress. Also acts on free nicotinamide adenine dinucleotide molecules: hydrolyzes NAD(H) into NMN(H) and AMP, and NADPH into NMNH and 2',5'-ADP. May act to regulate the concentration of peroxisomal nicotinamide nucleotide cofactors required for oxidative metabolism in this organelle. Regulates the levels of circadian clock components PER1, PER2, PER3 and CRY2 in the liver. The chain is NAD-capped RNA hydrolase NUDT12 from Bos taurus (Bovine).